The following is a 179-amino-acid chain: Large ribosomal subunit protein uL5 (179 aa).

It belongs to the universal ribosomal protein uL5 family. Part of the 50S ribosomal subunit; part of the 5S rRNA/L5/L18/L25 subcomplex. Contacts the 5S rRNA and the P site tRNA. Forms a bridge to the 30S subunit in the 70S ribosome.

Functionally, this is one of the proteins that bind and probably mediate the attachment of the 5S RNA into the large ribosomal subunit, where it forms part of the central protuberance. In the 70S ribosome it contacts protein S13 of the 30S subunit (bridge B1b), connecting the 2 subunits; this bridge is implicated in subunit movement. Contacts the P site tRNA; the 5S rRNA and some of its associated proteins might help stabilize positioning of ribosome-bound tRNAs. This Nitrosospira multiformis (strain ATCC 25196 / NCIMB 11849 / C 71) protein is Large ribosomal subunit protein uL5.